Consider the following 95-residue polypeptide: Alpha-bungarotoxin, isoform A31 (95 aa).

The first 21 residues, methionine 1 to threonine 21, serve as a signal peptide directing secretion. 5 disulfides stabilise this stretch: cysteine 24–cysteine 44, cysteine 37–cysteine 65, cysteine 50–cysteine 54, cysteine 69–cysteine 80, and cysteine 81–cysteine 86.

It belongs to the three-finger toxin family. Long-chain subfamily. Type II alpha-neurotoxin sub-subfamily. In terms of assembly, monomer in solution, homodimer in crystal state. Expressed by the venom gland.

The protein localises to the secreted. In terms of biological role, binds with high affinity to muscular (tested on Torpedo marmorata, Kd=0.4 nM) and neuronal (tested on chimeric alpha-7/CHRNA7, Kd=0.95 nM) nicotinic acetylcholine receptor (nAChR) and inhibits acetylcholine from binding to the receptor, thereby impairing neuromuscular and neuronal transmission. It also shows an activity on GABA(A) receptors. It antagonises GABA-activated currents with high potency when tested on primary hippocampal neurons. It inhibits recombinantly expressed GABA(A) receptors composed of alpha-2-beta-2-gamma-2 (GABRA2-GABRB2-GABRG2) subunits with high potency (62.3% inhibition at 20 uM of toxin). It also shows a weaker inhibition on GABA(A) receptors composed of alpha-1-beta-2-gamma-2 (GABRA1-GABRB2-GABRG2) subunits, alpha-4-beta-2-gamma-2 (GABRA4-GABRB2-GABRG2) subunits, and alpha-5-beta-2-gamma-2 (GABRA5-GABRB2-GABRG2) subunits. A very weak inhibition is also observed on GABA(A) receptor composed of alpha-1-beta-3-gamma-2 (GABRA1-GABRB3-GABRG2). It has also been shown to bind and inhibit recombinant GABA(A) receptor beta-3/GABRB3 subunit (Kd=about 50 nM). In addition, it blocks the extracellular increase of dopamine evoked by nicotine only at the higher dose (4.2 uM). In vivo, when intraperitoneally injected into mice, induces flaccid paralysis of the limbs and respiratory distress, and causes death in a dose-dependent manner. This Bungarus candidus (Malayan krait) protein is Alpha-bungarotoxin, isoform A31.